A 242-amino-acid polypeptide reads, in one-letter code: MKLSYFYVAADVPDGIIPESSVVIDVLRATTTIAWALENGADSVQVFADVDELKNQAKTFDSKEKILVGERGGKKLDGFDLGNSPLGVSPESVKGKRVFMSTTNGTRSLHRVRESKSLYTMALPNRKAIAERLKSDNPKEVWIVGSGWEGSYSLEDSLAAGALASLLMDQLESVQIVNDELMASVALWKNWENDVEGCLRIASHGQRLAGIGNHDDDFACCASLDNLSVIPKQIEMGVLRSN.

Belongs to the ComB family. Requires Mg(2+) as cofactor.

The enzyme catalyses (2R)-O-phospho-3-sulfolactate + H2O = (2R)-3-sulfolactate + phosphate. This Prochlorococcus marinus (strain NATL2A) protein is Probable 2-phosphosulfolactate phosphatase.